The chain runs to 136 residues: Ribosome-binding factor A (136 aa).

The segment at 114 to 136 is disordered; the sequence is DRANRPGPAADEPDEPDEPEDRR. Positions 124-136 are enriched in acidic residues; sequence DEPDEPDEPEDRR.

This sequence belongs to the RbfA family. In terms of assembly, monomer. Binds 30S ribosomal subunits, but not 50S ribosomal subunits or 70S ribosomes.

The protein resides in the cytoplasm. One of several proteins that assist in the late maturation steps of the functional core of the 30S ribosomal subunit. Associates with free 30S ribosomal subunits (but not with 30S subunits that are part of 70S ribosomes or polysomes). Required for efficient processing of 16S rRNA. May interact with the 5'-terminal helix region of 16S rRNA. The sequence is that of Ribosome-binding factor A from Bordetella petrii (strain ATCC BAA-461 / DSM 12804 / CCUG 43448).